The chain runs to 187 residues: Cytokinin riboside 5'-monophosphate phosphoribohydrolase (187 aa).

An Isoglutamyl lysine isopeptide (Lys-Gln) (interchain with Q-Cter in protein Pup) cross-link involves residue K74. Substrate contacts are provided by residues E80, 98 to 99 (RK), 115 to 121 (GVGTLDE), and T127.

This sequence belongs to the LOG family. As to quaternary structure, homodimer. Pupylated at Lys-74 by the prokaryotic ubiquitin-like protein Pup, which leads to its degradation by the proteasome. The proteasomal control of cytokinin synthesis is essential to protect M.tuberculosis against host-produced NO.

It carries out the reaction N(6)-(dimethylallyl)adenosine 5'-phosphate + H2O = N(6)-dimethylallyladenine + D-ribose 5-phosphate. The catalysed reaction is 9-ribosyl-trans-zeatin 5'-phosphate + H2O = trans-zeatin + D-ribose 5-phosphate. In terms of biological role, catalyzes the hydrolytic removal of ribose 5'-monophosphate from nitrogen N6-modified adenosines, the final step of bioactive cytokinin synthesis. Is involved in the synthesis of isopentenyladenine (iP) and 2-methylthio-iP (2MeS-iP), the most abundant cytokinins detected in M.tuberculosis lysates and supernatants. Is also able to convert trans-zeatin-riboside monophosphate (tZRMP) to trans-zeatin (tZ) in vitro; however, it may not be involved in the biosynthesis of this minor cytokinin in vivo. Accumulation of Rv1205 sensitizes M.tuberculosis to nitric oxide since cytokinin breakdown products synergize with NO to kill M.tuberculosis. Shows a slow AMP hydrolase activity, but is not able to hydrolyze ATP. Displays no lysine decarboxylase (LDC) activity (L-lysine conversion to cadaverine). This is Cytokinin riboside 5'-monophosphate phosphoribohydrolase from Mycobacterium tuberculosis (strain ATCC 25618 / H37Rv).